A 1107-amino-acid chain; its full sequence is Ubiquitin-associated protein 2-like (1107 aa).

Met-1 is subject to N-acetylmethionine. The interval 1–33 (MMTSVGTNRARGNWEQPQNQNQTQHKQRPQATA) is disordered. The region spanning 49–89 (DFEEKVKQLIDITGKNQDECVIALHDCNGDVNRAINVLLEG) is the UBA domain. Positions 92–229 (DTHSWEMVGK…NTWNNTGHFE (138 aa)) are disordered. The span at 118–132 (EEGKENRDRDRDYSR) shows a compositional bias: basic and acidic residues. A compositionally biased stretch (basic residues) spans 133–145 (RRGGPPRRGRGAS). Asymmetric dimethylarginine occurs at positions 187 and 190. Low complexity predominate over residues 213-226 (NYGNSSGNTWNNTG). Phosphoserine occurs at positions 376, 380, and 436. The residue at position 445 (Thr-445) is a Phosphothreonine. Disordered regions lie at residues 461–513 (AVAT…KKTS), 550–676 (SDYE…IPSL), and 689–814 (ANQH…LPPG). 5 positions are modified to phosphoserine: Ser-474, Ser-487, Ser-490, Ser-491, and Ser-497. Composition is skewed to low complexity over residues 494–505 (QSSSPQPAQQKL) and 554–589 (STPTTSASSSQAPSSLYTSTASESSSTVSSNQSQES). The span at 590 to 656 (GYQSGPIQST…TQLQTTQSVE (67 aa)) shows a compositional bias: polar residues. A phosphoserine mark is found at Ser-624, Ser-625, Ser-628, and Ser-629. Positions 665 to 675 (SESPSTSSIPS) are enriched in low complexity. Polar residues predominate over residues 689–713 (ANQHSSSLSGLSHTEEIPNTTTTQH). Residues 714-804 (SSALSTQQNT…STRSSVATTS (91 aa)) are compositionally biased toward low complexity. Phosphoserine is present on residues Ser-872 and Ser-879. 2 disordered regions span residues 885 to 921 (FGRGDASSPAPATTLAQPQQNQTQTHHTTQQTFLNPA) and 1060 to 1107 (QQPH…WGAN). Low complexity-rich tracts occupy residues 893–916 (PAPATTLAQPQQNQTQTHHTTQQT) and 1073–1087 (QDGQTGSGQRSQTSS). A compositionally biased stretch (polar residues) spans 1088-1107 (IPQKPQTNKSAYNSYSWGAN).

Interacts with BMI1. Part of a complex consisting of UBAP2L, BMI1 and RNF2. Interacts with G3BP1 (via NTF2 domain); promoting stress granule formation.

The protein localises to the nucleus. It is found in the chromosome. It localises to the cytoplasm. The protein resides in the stress granule. In terms of biological role, recruits the ubiquitination machinery to RNA polymerase II for polyubiquitination, removal and degradation, when the transcription-coupled nucleotide excision repair (TC-NER) machinery fails to resolve DNA damage. Plays an important role in the activity of long-term repopulating hematopoietic stem cells (LT-HSCs). Is a regulator of stress granule assembly, required for their efficient formation. Required for proper brain development and neocortex lamination. This is Ubiquitin-associated protein 2-like from Mus musculus (Mouse).